The primary structure comprises 240 residues: MTRYTYLFILQIISCSFAATWVKITKPTITWEDMEVSLEGEKKFFCGEFDSSFTGRYHWRFNGSSILPERTQIHRNQFVFLAGANAIRNQLPGEYECCVRETLGNACYSRMIVVQNRTDNHNIDMTNSTLLLADEGNTYYIRMHDVKRVEGVKCTLDGVNVDNFKYPFLGRQTKKTVPYHLKIENIERGGEVNCDLRLHKKEIVQKTFDIRLLRGFISSSQLPQFVYLIVFTIIGYILRL.

Positions 1 to 18 (MTRYTYLFILQIISCSFA) are cleaved as a signal peptide. The N-linked (GlcNAc...) asparagine glycan is linked to Asn-127. A helical membrane pass occupies residues 215 to 235 (GFISSSQLPQFVYLIVFTIIG).

The protein resides in the membrane. This is an uncharacterized protein from Caenorhabditis elegans.